The primary structure comprises 514 residues: Glutamate--cysteine ligase, chloroplastic (514 aa).

The N-terminal 55 residues, 1-55 (MALLSQAGGAYTVPSGHVSSRTGTKTVSGCVNVLRMKETYVSSYSRTLSTKSMLK), are a transit peptide targeting the chloroplast. Disulfide bonds link cysteine 178–cysteine 398 and cysteine 341–cysteine 356.

This sequence belongs to the carboxylate-amine ligase family. Glutamate--cysteine ligase type 2 subfamily. As to quaternary structure, homodimer or monomer when oxidized or reduced, respectively. Post-translationally, the Cys-178-Cys-398 disulfide bridge is known to modulate the enzyme activity according to the redox status. The oxidized form constitutes the active enzyme.

The protein localises to the plastid. It is found in the chloroplast. The enzyme catalyses L-cysteine + L-glutamate + ATP = gamma-L-glutamyl-L-cysteine + ADP + phosphate + H(+). It functions in the pathway sulfur metabolism; glutathione biosynthesis; glutathione from L-cysteine and L-glutamate: step 1/2. Its function is as follows. Participates in the detoxification process. The polypeptide is Glutamate--cysteine ligase, chloroplastic (GSH1) (Brassica juncea (Indian mustard)).